A 258-amino-acid chain; its full sequence is 5-oxoprolinase subunit A (258 aa).

It belongs to the LamB/PxpA family. Forms a complex composed of PxpA, PxpB and PxpC.

The enzyme catalyses 5-oxo-L-proline + ATP + 2 H2O = L-glutamate + ADP + phosphate + H(+). In terms of biological role, catalyzes the cleavage of 5-oxoproline to form L-glutamate coupled to the hydrolysis of ATP to ADP and inorganic phosphate. The sequence is that of 5-oxoprolinase subunit A from Corynebacterium jeikeium (strain K411).